We begin with the raw amino-acid sequence, 218 residues long: Cytidylate kinase (218 aa).

Residue 7 to 15 (GPSASGKSS) coordinates ATP.

This sequence belongs to the cytidylate kinase family. Type 1 subfamily.

It is found in the cytoplasm. It carries out the reaction CMP + ATP = CDP + ADP. The enzyme catalyses dCMP + ATP = dCDP + ADP. The chain is Cytidylate kinase from Borrelia duttonii (strain Ly).